The sequence spans 159 residues: 2-C-methyl-D-erythritol 2,4-cyclodiphosphate synthase (159 aa).

2 residues coordinate a divalent metal cation: aspartate 10 and histidine 12. 4-CDP-2-C-methyl-D-erythritol 2-phosphate contacts are provided by residues 10-12 (DVH) and 36-37 (HS). Histidine 44 contacts a divalent metal cation. Residues 58 to 60 (DIG), 63 to 67 (FSDTD), and arginine 144 contribute to the 4-CDP-2-C-methyl-D-erythritol 2-phosphate site.

It belongs to the IspF family. Homotrimer. The cofactor is a divalent metal cation.

The catalysed reaction is 4-CDP-2-C-methyl-D-erythritol 2-phosphate = 2-C-methyl-D-erythritol 2,4-cyclic diphosphate + CMP. It participates in isoprenoid biosynthesis; isopentenyl diphosphate biosynthesis via DXP pathway; isopentenyl diphosphate from 1-deoxy-D-xylulose 5-phosphate: step 4/6. Involved in the biosynthesis of isopentenyl diphosphate (IPP) and dimethylallyl diphosphate (DMAPP), two major building blocks of isoprenoid compounds. Catalyzes the conversion of 4-diphosphocytidyl-2-C-methyl-D-erythritol 2-phosphate (CDP-ME2P) to 2-C-methyl-D-erythritol 2,4-cyclodiphosphate (ME-CPP) with a corresponding release of cytidine 5-monophosphate (CMP). This is 2-C-methyl-D-erythritol 2,4-cyclodiphosphate synthase from Paraburkholderia phytofirmans (strain DSM 17436 / LMG 22146 / PsJN) (Burkholderia phytofirmans).